The sequence spans 525 residues: ATP synthase subunit alpha (525 aa).

172 to 179 is a binding site for ATP; sequence GDRQTGKT.

It belongs to the ATPase alpha/beta chains family. In terms of assembly, F-type ATPases have 2 components, CF(1) - the catalytic core - and CF(0) - the membrane proton channel. CF(1) has five subunits: alpha(3), beta(3), gamma(1), delta(1), epsilon(1). CF(0) has three main subunits: a(1), b(2) and c(9-12). The alpha and beta chains form an alternating ring which encloses part of the gamma chain. CF(1) is attached to CF(0) by a central stalk formed by the gamma and epsilon chains, while a peripheral stalk is formed by the delta and b chains.

Its subcellular location is the cell inner membrane. The enzyme catalyses ATP + H2O + 4 H(+)(in) = ADP + phosphate + 5 H(+)(out). In terms of biological role, produces ATP from ADP in the presence of a proton gradient across the membrane. The alpha chain is a regulatory subunit. The protein is ATP synthase subunit alpha of Parabacteroides distasonis (strain ATCC 8503 / DSM 20701 / CIP 104284 / JCM 5825 / NCTC 11152).